A 419-amino-acid polypeptide reads, in one-letter code: E3 ubiquitin-protein ligase RNF130 (419 aa).

The signal sequence occupies residues 1-27; the sequence is MSGAARAGPARLAALALLTCSLWPTRA. Residues 28 to 194 are Extracellular-facing; sequence DNASQEYYTA…MPPKNFSRGS (167 aa). Asn29, Asn40, Asn112, Asn135, Asn172, and Asn189 each carry an N-linked (GlcNAc...) asparagine glycan. The PA domain maps to 105–176; the sequence is IALLQRGNCT…SYLEKNISVQ (72 aa). Residues 195–217 traverse the membrane as a helical segment; sequence LVFVSISFIVLMIISSAWLIFYF. At 218–419 the chain is on the cytoplasmic side; that stretch reads IQKIRYTNAR…SLNANEVEWF (202 aa). The segment at 264 to 305 adopts an RING-type zinc-finger fold; the sequence is CAVCIESYKQNDVVRVLPCKHVFHKSCVDPWLSEHCTCPMCK.

Expression is highest in liver, with lesser amounts in the lung, spleen, brain, heart, kidney and testis.

Its subcellular location is the membrane. It localises to the cytoplasm. It carries out the reaction S-ubiquitinyl-[E2 ubiquitin-conjugating enzyme]-L-cysteine + [acceptor protein]-L-lysine = [E2 ubiquitin-conjugating enzyme]-L-cysteine + N(6)-ubiquitinyl-[acceptor protein]-L-lysine.. The protein operates within protein modification; protein ubiquitination. In terms of biological role, acts as an E3 ubiquitin-protein ligase. May have a role during the programmed cell death of hematopoietic cells. The sequence is that of E3 ubiquitin-protein ligase RNF130 from Mus musculus (Mouse).